Consider the following 617-residue polypeptide: Dihydroxy-acid dehydratase (617 aa).

Asp82 contacts Mg(2+). Cys123 lines the [2Fe-2S] cluster pocket. The Mg(2+) site is built by Asp124 and Lys125. The residue at position 125 (Lys125) is an N6-carboxylysine. [2Fe-2S] cluster is bound at residue Cys197. Mg(2+) is bound at residue Glu497. The active-site Proton acceptor is the Ser523.

It belongs to the IlvD/Edd family. In terms of assembly, homodimer. [2Fe-2S] cluster is required as a cofactor. Mg(2+) serves as cofactor.

It carries out the reaction (2R)-2,3-dihydroxy-3-methylbutanoate = 3-methyl-2-oxobutanoate + H2O. The catalysed reaction is (2R,3R)-2,3-dihydroxy-3-methylpentanoate = (S)-3-methyl-2-oxopentanoate + H2O. Its pathway is amino-acid biosynthesis; L-isoleucine biosynthesis; L-isoleucine from 2-oxobutanoate: step 3/4. The protein operates within amino-acid biosynthesis; L-valine biosynthesis; L-valine from pyruvate: step 3/4. Functions in the biosynthesis of branched-chain amino acids. Catalyzes the dehydration of (2R,3R)-2,3-dihydroxy-3-methylpentanoate (2,3-dihydroxy-3-methylvalerate) into 2-oxo-3-methylpentanoate (2-oxo-3-methylvalerate) and of (2R)-2,3-dihydroxy-3-methylbutanoate (2,3-dihydroxyisovalerate) into 2-oxo-3-methylbutanoate (2-oxoisovalerate), the penultimate precursor to L-isoleucine and L-valine, respectively. The polypeptide is Dihydroxy-acid dehydratase (Streptomyces coelicolor (strain ATCC BAA-471 / A3(2) / M145)).